We begin with the raw amino-acid sequence, 38 residues long: Glutathione S-transferase 2 (38 aa).

It belongs to the GST superfamily. Phi family.

It catalyses the reaction RX + glutathione = an S-substituted glutathione + a halide anion + H(+). Functionally, conjugation of reduced glutathione to a wide number of exogenous and endogenous hydrophobic electrophiles. In plants, may have a detoxification role against certain herbicides. This Populus euphratica (Euphrates poplar) protein is Glutathione S-transferase 2.